Here is a 1072-residue protein sequence, read N- to C-terminus: MAVINKAGNVIALLLVKLQLILLFTLSVSGELPQLDYGSLSASLEEDAIDPLTAMAPFANSLVTEESAQHKNNAELLGNSSEDENVRPQQGSSSSGLGSSGAAGGSGILLEEFNSGKLSPGEASNTLPIFLIEPESVFVVKNRPAVLKCKASHSLQVIFKCSGSSQPPPSTHETHVDPHTGVNMEEVTATIHRDLVDEFFGDGPFKCECHAWSSRGVVKSQAATVHIAYIRKSFNQSPTSLRLELGSRAELRCEPPGGFPEPKLTWHKNNAVITADSEPGITVSAGTLIFRQVALQHMANYSCSAENIAGRRVSDSAVLIVYVNGGWSTWSPWRECKCAGKPSQGRKRSRTCNNPMPLNGGAQCPGPQIQKSADCAACPEDTQIVSPDGFDISSSKRMARWSAWSDWSICSAECIQVRRRKCLTQGQTQISSEAEEAGDLLLGAPGVGMAALIAAAGVGAVGSPSEATGSSSDIIPGYGKSLCAGKDIQTAECRGEQCQIGKDDFDWTLYLGLAFITAVCFAFGTALICCARRGIRTNPHYNMARSVMDADYMPGVVEKKEMRMHIEASNMGYDYVNPGHRYLPGEHIMGMGIGCGGVTEHHYDVPNLSANYTNPIDHLSVDYLSETGESSTADTSNSTFDMNGKLSILNASKSSTYEMLGSAGGQLRLYGGELLLFVPEHAIGKHVKKHVSLLLLSDECSRVSCATESSILCSSVVHSAPRNYSFVKPVILKIPHCLVAPEQWHVHIYHADSEHDELSVNWRRAVSVGEETINTPMFVQLEATHVFIMTEQLGHFTVVAEPRIQQPSIKMKLLAFSQHTPPSNANCSLRIYVVKDFPNSRDICANVEAKLGGSFLGESQVFAFTLNSRNLNIRVRSADVEAAAPYEHAIPYQHILSNNSILHCEFSLRRQDQNSLCVDFGQGSEDDYYTFNIPAHSMSGSAEELASTTNTTISIDRQGNYVNESCVMDFVQLPHATKRLICGALDPPRADERDWRLLAKKLNTDRYIAYFATKASPTEQILNLWECRANSSPGSSSNSVSHTIMALLLTLKEMGRQDVLDIIVETIGPLWI.

Residues 1–30 (MAVINKAGNVIALLLVKLQLILLFTLSVSG) form the signal peptide. Residues 31–440 (ELPQLDYGSL…SSEAEEAGDL (410 aa)) are Extracellular-facing. Residues 77-100 (LGNSSEDENVRPQQGSSSSGLGSS) are disordered. Asn79 carries an N-linked (GlcNAc...) asparagine glycan. The Ig-like domain occupies 128 to 224 (PIFLIEPESV…RGVVKSQAAT (97 aa)). Disulfide bonds link Cys149-Cys207, Cys253-Cys303, Cys336-Cys375, Cys338-Cys378, and Cys352-Cys364. Residues 232–314 (KSFNQSPTSL…AENIAGRRVS (83 aa)) form the Ig-like C2-type domain. A glycan (N-linked (GlcNAc...) asparagine) is linked at Asn300. TSP type-1 domains are found at residues 324–379 (NGGW…AACP) and 398–499 (MARW…EQCQ). Residues 441-461 (LLGAPGVGMAALIAAAGVGAV) traverse the membrane as a helical segment. Residues 462 to 1072 (GSPSEATGSS…IVETIGPLWI (611 aa)) are Cytoplasmic-facing. The ZU5 domain maps to 654 to 802 (SSTYEMLGSA…LGHFTVVAEP (149 aa)). Residues 980-1067 (LICGALDPPR…DVLDIIVETI (88 aa)) form the Death domain.

It belongs to the unc-5 family. Phosphorylated on different cytoplasmic tyrosine residues. In terms of tissue distribution, prior to gastrulation, it is strongly expressed in the presumptive mesoderm. Mesodermal expression begins to fade during stages 13-14, persisting only in the cells that form the dorsal vessel. Expressed within the CNS from late stage 13, shortly after the first axons have extended. Detected in several dispersed clusters of cells within the CNS, increasing in number as development proceeds. Also expressed in the peripheral and exit glia, which migrate laterally out of the CNS between stages 14 and 17. Strongly expressed in motor axons that exit the CNS ipsilaterally via the segmental nerve root (SN). Not expressed on either commissural or longitudinal axons within the CNS, nor on motor axons that exit via the intersegmental nerve (ISN). In the periphery, it is detected on all branches of the SN. Also expressed at high level in exit and peripheral glia along both the SN and ISN.

The protein localises to the membrane. Receptor for netrin required for motor axon guidance. Mediates both short- and long-range axon motor repulsion in the developing nervous system upon ligand binding. Also involved in glial migration. While short-range repulsion requires both fra and unc-5, long-range repulsion only requires unc-5. The sequence is that of Netrin receptor unc-5 (unc-5) from Drosophila melanogaster (Fruit fly).